A 373-amino-acid polypeptide reads, in one-letter code: LIM domain-binding protein 2 (373 aa).

2 disordered regions span residues 244–287 and 327–373; these read APPA…KTPA and QYDA…QASQ. Residues 263 to 280 are compositionally biased toward low complexity; it reads STSSTSNSSAGNTTNSAG. The 40-residue stretch at 298–337 folds into the LIM interaction domain (LID) domain; the sequence is DVMVVGEPTLMGGEFGDEDERLITRLENTQYDAANGMDDE. Residues 341 to 373 show a composition bias toward polar residues; that stretch reads NNSPALGNNSPWNSKPPATQETKSENAPPQASQ.

The protein belongs to the LDB family. In terms of assembly, interacts with LHX9. Interacts with SLK; leading to negatively regulate SLK kinase activity. Interacts with LMO4. Interacts with PITX1. Interacts with LHX3. In terms of processing, ubiquitinated by RLIM/RNF12, leading to its degradation by the proteasome. As to expression, expressed in multiple tissues including heart, brain, liver, kidney, testis, lung and muscle, with expression highest in the brain, trigeminal ganglia, and lung.

The protein localises to the nucleus. Transcription cofactor. Binds to the LIM domain of a wide variety of LIM domain-containing transcription factors. Its function is as follows. Regulates the transcriptional activity of LIM-containing proteins such as LHX3 or PITX1. This chain is LIM domain-binding protein 2 (Ldb2), found in Mus musculus (Mouse).